Here is a 195-residue protein sequence, read N- to C-terminus: Peptidyl-tRNA hydrolase (195 aa).

Tyr-17 is a binding site for tRNA. His-22 (proton acceptor) is an active-site residue. 3 residues coordinate tRNA: Tyr-68, Asn-70, and Asn-116.

It belongs to the PTH family. Monomer.

It localises to the cytoplasm. It carries out the reaction an N-acyl-L-alpha-aminoacyl-tRNA + H2O = an N-acyl-L-amino acid + a tRNA + H(+). Its function is as follows. Hydrolyzes ribosome-free peptidyl-tRNAs (with 1 or more amino acids incorporated), which drop off the ribosome during protein synthesis, or as a result of ribosome stalling. Functionally, catalyzes the release of premature peptidyl moieties from peptidyl-tRNA molecules trapped in stalled 50S ribosomal subunits, and thus maintains levels of free tRNAs and 50S ribosomes. The polypeptide is Peptidyl-tRNA hydrolase (Shewanella oneidensis (strain ATCC 700550 / JCM 31522 / CIP 106686 / LMG 19005 / NCIMB 14063 / MR-1)).